Reading from the N-terminus, the 141-residue chain is Large ribosomal subunit protein uL11 (141 aa).

This sequence belongs to the universal ribosomal protein uL11 family. In terms of assembly, part of the ribosomal stalk of the 50S ribosomal subunit. Interacts with L10 and the large rRNA to form the base of the stalk. L10 forms an elongated spine to which L12 dimers bind in a sequential fashion forming a multimeric L10(L12)X complex. One or more lysine residues are methylated.

Forms part of the ribosomal stalk which helps the ribosome interact with GTP-bound translation factors. The sequence is that of Large ribosomal subunit protein uL11 from Campylobacter fetus subsp. fetus (strain 82-40).